Here is a 334-residue protein sequence, read N- to C-terminus: NADH-ubiquinone oxidoreductase chain 1 (334 aa).

Helical transmembrane passes span 4-24, 82-102, 115-135, 161-181, 187-207, 222-242, 247-267, 268-288, and 311-331; these read FVFL…IIVI, FIYV…WGVI, IGIL…LMSG, IGLI…TEIV, GIWF…SALA, ELVS…FFLA, IILM…SPIV, FFKG…LLFI, and LPLS…LNGL.

The protein belongs to the complex I subunit 1 family.

The protein resides in the mitochondrion inner membrane. It catalyses the reaction a ubiquinone + NADH + 5 H(+)(in) = a ubiquinol + NAD(+) + 4 H(+)(out). Its function is as follows. Core subunit of the mitochondrial membrane respiratory chain NADH dehydrogenase (Complex I) that is believed to belong to the minimal assembly required for catalysis. Complex I functions in the transfer of electrons from NADH to the respiratory chain. The immediate electron acceptor for the enzyme is believed to be ubiquinone. The sequence is that of NADH-ubiquinone oxidoreductase chain 1 (ND1) from Metridium senile (Brown sea anemone).